Consider the following 319-residue polypeptide: MVPSKANEDFLIANAHAKINLHLEVLGIRSDGFHELAMVMQSINLSDQLKMIKRVDNTINLKSNNKEISNGDDNLIIKAAKLLRNKVENQELGVDIELEKNIPIGAGLAGGSTDAAATLLGLNKLWKLNLKIDELENLSKEIGSDIPFCISGGRQICFGRGEILEKLKFDQIQLGLVLVKDPSIQVSTPVAYKKYKEQFGESYLEDDRDFEIKRNSIRSIDWSDQSLFDNRKEIQNDLQKSIRPMTPEVEKSLNLLSSLPDSRLVSMSGSGPSCFALFQNYDQANKVLKEHVNEFERAGLSAWACSMMSNGVELRNEFT.

The active site involves Lys18. 103 to 113 (PIGAGLAGGST) is an ATP binding site. Asp145 is a catalytic residue.

It belongs to the GHMP kinase family. IspE subfamily.

It carries out the reaction 4-CDP-2-C-methyl-D-erythritol + ATP = 4-CDP-2-C-methyl-D-erythritol 2-phosphate + ADP + H(+). It participates in isoprenoid biosynthesis; isopentenyl diphosphate biosynthesis via DXP pathway; isopentenyl diphosphate from 1-deoxy-D-xylulose 5-phosphate: step 3/6. Its function is as follows. Catalyzes the phosphorylation of the position 2 hydroxy group of 4-diphosphocytidyl-2C-methyl-D-erythritol. The polypeptide is 4-diphosphocytidyl-2-C-methyl-D-erythritol kinase (Prochlorococcus marinus (strain NATL2A)).